The following is a 105-amino-acid chain: Large ribosomal subunit protein bL21 (105 aa).

This sequence belongs to the bacterial ribosomal protein bL21 family. In terms of assembly, part of the 50S ribosomal subunit. Contacts protein L20.

This protein binds to 23S rRNA in the presence of protein L20. This Treponema pallidum (strain Nichols) protein is Large ribosomal subunit protein bL21.